The primary structure comprises 683 residues: Acetyl-coenzyme A synthetase 2 (683 aa).

Residues 206–209 (RGGK) and Thr325 each bind CoA. Residues 401–403 (GEP) and 425–430 (DTMWQT) contribute to the ATP site. 425-430 (DTMWQT) contributes to the AMP binding site. Lys506 is covalently cross-linked (Glycyl lysine isopeptide (Lys-Gly) (interchain with G-Cter in ubiquitin)). Residues Asp516 and Arg531 each coordinate ATP. AMP is bound by residues Asp516 and Arg531. Ser539 lines the CoA pocket. Arg542 contacts ATP. Residue Arg612 coordinates CoA. Ser679 carries the post-translational modification Phosphoserine.

It belongs to the ATP-dependent AMP-binding enzyme family.

It localises to the cytoplasm. The protein resides in the nucleus. It catalyses the reaction acetate + ATP + CoA = acetyl-CoA + AMP + diphosphate. It participates in carbohydrate metabolism; pyruvate metabolism. Functionally, catalyzes the production of acetyl-CoA. Provides the acetyl-CoA source for histone acetylation in the nucleus. 'Anaerobic' isozyme of acetyl-coenzyme A synthetase, which is required for growth on fermentable carbon sources such as glucose. May be involved in the PDH (pyruvate dehydrogenase complex) bypass. In Saccharomyces cerevisiae (strain ATCC 204508 / S288c) (Baker's yeast), this protein is Acetyl-coenzyme A synthetase 2.